Here is a 163-residue protein sequence, read N- to C-terminus: Putative 4-hydroxy-4-methyl-2-oxoglutarate aldolase (163 aa).

Substrate contacts are provided by residues 75 to 78 and arginine 97; that span reads GDQL. Aspartate 98 is a binding site for a divalent metal cation.

The protein belongs to the class II aldolase/RraA-like family. In terms of assembly, homotrimer. A divalent metal cation is required as a cofactor.

The enzyme catalyses 4-hydroxy-4-methyl-2-oxoglutarate = 2 pyruvate. The catalysed reaction is oxaloacetate + H(+) = pyruvate + CO2. Its function is as follows. Catalyzes the aldol cleavage of 4-hydroxy-4-methyl-2-oxoglutarate (HMG) into 2 molecules of pyruvate. Also contains a secondary oxaloacetate (OAA) decarboxylase activity due to the common pyruvate enolate transition state formed following C-C bond cleavage in the retro-aldol and decarboxylation reactions. In Photobacterium profundum (strain SS9), this protein is Putative 4-hydroxy-4-methyl-2-oxoglutarate aldolase.